Consider the following 147-residue polypeptide: Leghemoglobin 3 (147 aa).

The 146-residue stretch at 2 to 147 folds into the Globin domain; that stretch reads GFTAQQEALV…LATAIKKAMG (146 aa). A Nitrated tyrosine modification is found at Tyr-30. Residue Ser-45 coordinates heme b. The residue at position 45 (Ser-45) is a Phosphoserine. His-61 serves as a coordination point for O2. Positions 64, 93, and 96 each coordinate heme b. Tyr-135 is modified (nitrated tyrosine).

This sequence belongs to the plant globin family. Monomer. Post-translationally, nitrated in effective nodules and particularly in hypoxic conditions; this mechanism may play a protective role in the symbiosis by buffering toxic peroxynitrite NO(2)(-). Nitration level decrease during nodule senescence. In terms of processing, phosphorylation at Ser-45 disrupts the molecular environment of its porphyrin ring oxygen binding pocket, thus leading to a reduced oxygen consumption and to the delivery of oxygen O(2) to symbiosomes. In terms of tissue distribution, specifically and strongly expressed in root nodules and at low levels in seedlings.

It localises to the cytoplasm. Its subcellular location is the cytosol. It is found in the nucleus. Functionally, leghemoglobin that reversibly binds oxygen O(2) through a pentacoordinated heme iron. In root nodules, facilitates the diffusion of oxygen to the bacteroids while preventing the bacterial nitrogenase from being inactivated by buffering dioxygen, nitric oxide and carbon monoxide, and promoting the formation of reactive oxygen species (ROS, e.g. H(2)O(2)). This role is essential for symbiotic nitrogen fixation (SNF). The polypeptide is Leghemoglobin 3 (Lotus japonicus (Lotus corniculatus var. japonicus)).